The chain runs to 437 residues: Protein arginine methyltransferase NDUFAF7, mitochondrial (437 aa).

Residues 1-42 (MSGLARLQRLQKFGFLMVSASANRPIQRYQCSRTEKPQKRTS) constitute a mitochondrion transit peptide.

It belongs to the NDUFAF7 family.

Its subcellular location is the mitochondrion. It catalyses the reaction L-arginyl-[protein] + 2 S-adenosyl-L-methionine = N(omega),N(omega)'-dimethyl-L-arginyl-[protein] + 2 S-adenosyl-L-homocysteine + 2 H(+). In terms of biological role, arginine methyltransferase involved in the assembly or stability of mitochondrial NADH:ubiquinone oxidoreductase complex (complex I). Acts by mediating symmetric dimethylation of 'Arg-118' of ndufs2 after it assembles into the complex I, stabilizing the early intermediate complex. This is Protein arginine methyltransferase NDUFAF7, mitochondrial from Xenopus laevis (African clawed frog).